The sequence spans 288 residues: 4-diphosphocytidyl-2-C-methyl-D-erythritol kinase (288 aa).

Lysine 8 is an active-site residue. 90–100 (PFGAGLGGGSS) is an ATP binding site. Aspartate 132 is a catalytic residue.

This sequence belongs to the GHMP kinase family. IspE subfamily.

It carries out the reaction 4-CDP-2-C-methyl-D-erythritol + ATP = 4-CDP-2-C-methyl-D-erythritol 2-phosphate + ADP + H(+). The protein operates within isoprenoid biosynthesis; isopentenyl diphosphate biosynthesis via DXP pathway; isopentenyl diphosphate from 1-deoxy-D-xylulose 5-phosphate: step 3/6. Catalyzes the phosphorylation of the position 2 hydroxy group of 4-diphosphocytidyl-2C-methyl-D-erythritol. In Chlorobium chlorochromatii (strain CaD3), this protein is 4-diphosphocytidyl-2-C-methyl-D-erythritol kinase.